A 153-amino-acid polypeptide reads, in one-letter code: MFTESMLFLLLFLLLGLIAKNNSLIIAVAVVILLKLFHVDGKAMELIQAKGINWGVTIITVAILIPIATGQIGFKDLIDSFKSAAGWIGLGAGIAVSILAKKGVGYMAVDPQVTVSLVFGTILAVVLFRGIAAGPVIAAGIAYMAMQLVAFIK.

A run of 4 helical transmembrane segments spans residues 6–26, 54–74, 80–100, and 117–137; these read MLFLLLFLLLGLIAKNNSLII, WGVTIITVAILIPIATGQIGF, SFKSAAGWIGLGAGIAVSILA, and LVFGTILAVVLFRGIAAGPVI.

It belongs to the UPF0756 family.

Its subcellular location is the cell membrane. The sequence is that of UPF0756 membrane protein lin1603 from Listeria innocua serovar 6a (strain ATCC BAA-680 / CLIP 11262).